Here is a 135-residue protein sequence, read N- to C-terminus: Probable transporter XF_0766 (135 aa).

4 consecutive transmembrane segments (helical) span residues 4–24 (YWYP…LLLL), 45–65 (AQDI…SVIF), 71–91 (VTVA…GLGT), and 114–134 (IVAT…MGVY).

This sequence belongs to the TsuA/YedE (TC 9.B.102) family.

It is found in the cell inner membrane. The polypeptide is Probable transporter XF_0766 (Xylella fastidiosa (strain 9a5c)).